A 316-amino-acid chain; its full sequence is Pantothenate kinase (316 aa).

ATP is bound at residue 95 to 102 (GSVSVGKS).

The protein belongs to the prokaryotic pantothenate kinase family.

The protein localises to the cytoplasm. It catalyses the reaction (R)-pantothenate + ATP = (R)-4'-phosphopantothenate + ADP + H(+). Its pathway is cofactor biosynthesis; coenzyme A biosynthesis; CoA from (R)-pantothenate: step 1/5. This chain is Pantothenate kinase, found in Actinobacillus pleuropneumoniae serotype 7 (strain AP76).